Consider the following 860-residue polypeptide: Alpha,alpha-trehalose-phosphate synthase [UDP-forming] 6 (860 aa).

S5 bears the Phosphoserine mark. The interval 53–557 (DRIIIVANEL…ARSFLQDLER (505 aa)) is glycosyltransferase.

In the N-terminal section; belongs to the glycosyltransferase 20 family. The protein in the C-terminal section; belongs to the trehalose phosphatase family. As to quaternary structure, binds to the phosphopeptide-binding site of GRF/14-3-3. Post-translationally, phosphorylated. In terms of tissue distribution, expressed in seedlings, leaves, stems, flowers, siliques and roots.

The enzyme catalyses D-glucose 6-phosphate + UDP-alpha-D-glucose = alpha,alpha-trehalose 6-phosphate + UDP + H(+). Its function is as follows. Regulates plant architecture, shape of epidermal pavement cells and branching of trichomes. The protein is Alpha,alpha-trehalose-phosphate synthase [UDP-forming] 6 of Arabidopsis thaliana (Mouse-ear cress).